Reading from the N-terminus, the 436-residue chain is Trigger factor (436 aa).

Positions 161 to 246 constitute a PPIase FKBP-type domain; sequence DDQLNIDFVG…VNSVAEPKLP (86 aa).

This sequence belongs to the FKBP-type PPIase family. Tig subfamily.

The protein localises to the cytoplasm. The enzyme catalyses [protein]-peptidylproline (omega=180) = [protein]-peptidylproline (omega=0). Involved in protein export. Acts as a chaperone by maintaining the newly synthesized protein in an open conformation. Functions as a peptidyl-prolyl cis-trans isomerase. In Pseudomonas paraeruginosa (strain DSM 24068 / PA7) (Pseudomonas aeruginosa (strain PA7)), this protein is Trigger factor.